An 86-amino-acid chain; its full sequence is Small ribosomal subunit protein uS17 (86 aa).

Belongs to the universal ribosomal protein uS17 family. As to quaternary structure, part of the 30S ribosomal subunit.

Its function is as follows. One of the primary rRNA binding proteins, it binds specifically to the 5'-end of 16S ribosomal RNA. The chain is Small ribosomal subunit protein uS17 from Streptococcus pyogenes serotype M3 (strain ATCC BAA-595 / MGAS315).